The primary structure comprises 693 residues: MSAREPAGRRRRASTRPRASPVADEPAGDGVGFMGYLRAVFRGDDDSELEALEEMAGDEPPVRRRREGPRARRRRASEAPPTSHRRASRQRPGPDAARSQSVRGRLDDDDEVPRGPPQARQGGYLGPVDARAILGRVGGSRVAPSPLFLEELQYEEDDYPEAVGPEDGGGARSPPKVEVLEGRVPGPELRAAFPLDRLAPQVAVWDESVRSALALGHPAGFYPCPDSAFGLSRVGVMHFASPDNPAVFFRQTLQQGEALAWYITGDGILDLTDRRTKTSPAQAMSFLADAVVRLAINGWVCGTRLHAEARGSDLDDRAAELRRQFASLTALRPVGAAAVPLLSAGGLVSPQSGPDAAVFRSSLGSLLYWPGVRALLDRDCRVAARYAGRMTYLATGALLARFNPDAVRCVLTREAAFLGRVLDVLAVMAEQTVQWLSVVVGARLHPHVHHPAFADVAREELFRALPLGSPAVVGAEHEALGDTAARRLLANSGLNAVLGAAVYALHTALATVTLKYARACGDAHRRRDDAAATRAILAAGLVLQRLLGFADTVVACVTLAAFDGGFTAPEVGTYTPLRYACVLRATQPLYARTTPAKFWADVRAAAEHVDLRPASSAPRAPVSGTADPAFLLKDLEPFPPAPVSGGSVLGPRVRVVDIMSQFRKLLMGDEGAAALRAHVSGRRATGLGGPPRP.

Disordered stretches follow at residues 1-32 and 48-126; these read MSAR…DGVG and ELEA…GYLG. Positions 48–57 are enriched in acidic residues; the sequence is ELEALEEMAG. Positions 50 to 75 are RNA-binding; it reads EALEEMAGDEPPVRRRREGPRARRRR. Residues 63–75 carry the Nuclear localization signal motif; that stretch reads RRRREGPRARRRR. Positions 63 to 75 are enriched in basic residues; that stretch reads RRRREGPRARRRR. Positions 647–670 match the Nuclear export signal motif; sequence SVLGPRVRVVDIMSQFRKLLMGDE.

This sequence belongs to the alphaherpesvirinae HHV-1 UL47 family. Interacts with US3 kinase. Interacts with UL31 and UL34; these interactions seem important for efficient virion nuclear egress. Interacts with UL41/VHS. Phosphorylated by US3. This phosphorylation is required for proper nuclear localization.

Its subcellular location is the virion tegument. The protein resides in the host nucleus. It localises to the host cytoplasm. In terms of biological role, tegument protein that can bind to various RNA transcripts. Plays a role in the attenuation of selective viral and cellular mRNA degradation by modulating the activity of host shutoff RNase UL41/VHS. Also plays a role in the primary envelopment of virions in the perinuclear space, probably by interacting with two nuclear egress proteins UL31 and UL34. This Homo sapiens (Human) protein is Tegument protein UL47.